Consider the following 1058-residue polypeptide: Carbamoyl phosphate synthase large chain (1058 aa).

Residues 1–401 (MPKRKDIQKI…SLLKACRSLE (401 aa)) are carboxyphosphate synthetic domain. Arginine 129, arginine 169, glycine 175, glycine 176, arginine 208, isoleucine 210, glutamate 215, glycine 241, isoleucine 242, histidine 243, glutamine 284, and glutamate 298 together coordinate ATP. The ATP-grasp 1 domain occupies 133 to 327 (KQLMQELDQP…IAKLAAKIAV (195 aa)). Glutamine 284, glutamate 298, and asparagine 300 together coordinate Mg(2+). The Mn(2+) site is built by glutamine 284, glutamate 298, and asparagine 300. An oligomerization domain region spans residues 402 to 546 (IGVCHNEMTS…YSTYELENES (145 aa)). The interval 547–929 (VQSNKESILV…ALYKAFEANN (383 aa)) is carbamoyl phosphate synthetic domain. Residues 671 to 861 (EKALKELGIP…MAQIATKLIL (191 aa)) enclose the ATP-grasp 2 domain. ATP contacts are provided by arginine 707, serine 746, isoleucine 748, glutamate 752, glycine 777, valine 778, histidine 779, serine 780, glutamine 820, and glutamate 832. Glutamine 820, glutamate 832, and asparagine 834 together coordinate Mg(2+). Residues glutamine 820, glutamate 832, and asparagine 834 each contribute to the Mn(2+) site. The MGS-like domain occupies 930 to 1058 (SHLSEFGQIV…ESRCFNIEAI (129 aa)). The tract at residues 930-1058 (SHLSEFGQIV…ESRCFNIEAI (129 aa)) is allosteric domain.

The protein belongs to the CarB family. Composed of two chains; the small (or glutamine) chain promotes the hydrolysis of glutamine to ammonia, which is used by the large (or ammonia) chain to synthesize carbamoyl phosphate. Tetramer of heterodimers (alpha,beta)4. Mg(2+) is required as a cofactor. Requires Mn(2+) as cofactor.

The enzyme catalyses hydrogencarbonate + L-glutamine + 2 ATP + H2O = carbamoyl phosphate + L-glutamate + 2 ADP + phosphate + 2 H(+). The catalysed reaction is hydrogencarbonate + NH4(+) + 2 ATP = carbamoyl phosphate + 2 ADP + phosphate + 2 H(+). Its pathway is amino-acid biosynthesis; L-arginine biosynthesis; carbamoyl phosphate from bicarbonate: step 1/1. The protein operates within pyrimidine metabolism; UMP biosynthesis via de novo pathway; (S)-dihydroorotate from bicarbonate: step 1/3. Functionally, large subunit of the glutamine-dependent carbamoyl phosphate synthetase (CPSase). CPSase catalyzes the formation of carbamoyl phosphate from the ammonia moiety of glutamine, carbonate, and phosphate donated by ATP, constituting the first step of 2 biosynthetic pathways, one leading to arginine and/or urea and the other to pyrimidine nucleotides. The large subunit (synthetase) binds the substrates ammonia (free or transferred from glutamine from the small subunit), hydrogencarbonate and ATP and carries out an ATP-coupled ligase reaction, activating hydrogencarbonate by forming carboxy phosphate which reacts with ammonia to form carbamoyl phosphate. This Streptococcus pyogenes serotype M3 (strain SSI-1) protein is Carbamoyl phosphate synthase large chain.